Reading from the N-terminus, the 513-residue chain is Alpha-1B-glycoprotein (513 aa).

Residues M1–A20 form the signal peptide. 5 consecutive Ig-like V-type domains span residues W22–K126, E127–T219, Q220–L312, M313–N415, and G416–S513. N-linked (GlcNAc...) asparagine glycans are attached at residues N44, N89, and N192. 5 disulfide bridges follow: C49/C96, C153/C195, C245/C292, C343/C392, and C441/C488. 4 N-linked (GlcNAc...) asparagine glycosylation sites follow: N369, N381, N389, and N485.

In terms of assembly, interacts with CRISP3. In terms of tissue distribution, isoform 1 is expressed in normal liver. Isoform 2 is expressed in the regenerating liver after partial hepatectomy and at very low levels in the normal lung, brain and testis.

It localises to the secreted. In Rattus norvegicus (Rat), this protein is Alpha-1B-glycoprotein.